We begin with the raw amino-acid sequence, 164 residues long: C-phycoerythrin class 1 subunit alpha (164 aa).

Positions 82 and 139 each coordinate (2R,3E)-phycoerythrobilin.

It belongs to the phycobiliprotein family. In terms of assembly, heterodimer of an alpha and a beta chain. In terms of processing, contains two covalently linked phycoerythrobilin chromophores.

The protein resides in the cellular thylakoid membrane. Functionally, light-harvesting photosynthetic bile pigment-protein from the phycobiliprotein complex. The chain is C-phycoerythrin class 1 subunit alpha (cpeA) from Synechococcus sp. (strain WH8020).